Consider the following 545-residue polypeptide: Calcium-dependent protein kinase 6 (545 aa).

A lipid anchor (N-myristoyl glycine) is attached at glycine 2. The segment covering 34–43 has biased composition (low complexity); the sequence is CSSTSTATSS. Residues 34 to 58 form a disordered region; the sequence is CSSTSTATSSGGRMPIRSHQQRLSS. The Protein kinase domain maps to 74 to 332; the sequence is YTVGRKLGQG…AHQVLCHPWV (259 aa). ATP contacts are provided by residues 80-88 and lysine 103; that span reads LGQGQFGTT. The active-site Proton acceptor is aspartate 198. The segment at 338 to 368 is autoinhibitory domain; sequence APDRPLAPAVLSRLKQFSAMNRLKKMALRVI. 4 consecutive EF-hand domains span residues 375 to 410, 411 to 446, 447 to 482, and 486 to 516; these read EELA…YGSN, LREA…LNKL, EREE…HNMA, and IDDI…GAID. Positions 388, 390, 392, 399, 424, 426, 428, 430, 435, 460, 462, 464, 466, 471, 494, 496, 498, 500, and 505 each coordinate Ca(2+). Positions 526 to 545 are disordered; sequence GRPTTATSDDPSPTISSSSR. Residues 528-545 show a composition bias toward low complexity; the sequence is PTTATSDDPSPTISSSSR.

The protein belongs to the protein kinase superfamily. Ser/Thr protein kinase family. CDPK subfamily.

It localises to the membrane. The catalysed reaction is L-seryl-[protein] + ATP = O-phospho-L-seryl-[protein] + ADP + H(+). The enzyme catalyses L-threonyl-[protein] + ATP = O-phospho-L-threonyl-[protein] + ADP + H(+). Activated by calcium. Autophosphorylation may play an important role in the regulation of the kinase activity. In terms of biological role, may play a role in signal transduction pathways that involve calcium as a second messenger. The protein is Calcium-dependent protein kinase 6 of Oryza sativa subsp. japonica (Rice).